Reading from the N-terminus, the 195-residue chain is Transmembrane protein 134 (195 aa).

Disordered stretches follow at residues 1-33 (MSAA…VARF) and 48-88 (DEDK…TSIR). At 1 to 122 (MSAARPQFSI…QHPLIQKNRR (122 aa)) the chain is on the cytoplasmic side. Serine 93 carries the post-translational modification Phosphoserine. Residues 123-143 (VVLASFLLLLLGLVLILVGVG) form a helical membrane-spanning segment. Residues 144–154 (LEATPSPGVSS) are Extracellular-facing. The chain crosses the membrane as a helical span at residues 155–175 (AIFFVPGFLLLVPGVYHVIFI). Over 176–195 (YCAVKGHRGFQFFYLPYFEK) the chain is Cytoplasmic.

The protein belongs to the TMEM134/TMEM230 family. As to quaternary structure, (Microbial infection) Interacts with Hepatitis E virus (HEV) ORF2.

The protein resides in the membrane. The protein localises to the cytoplasm. It is found in the perinuclear region. This is Transmembrane protein 134 (TMEM134) from Homo sapiens (Human).